Consider the following 442-residue polypeptide: Probable 6-phospho-beta-glucosidase (442 aa).

5 to 73 serves as a coordination point for NAD(+); the sequence is LKIVTIGGGS…VPIDIHLTLD (69 aa). Substrate-binding residues include Arg-96 and Asn-150. Mn(2+) is bound by residues Cys-172 and His-202. The Proton acceptor role is filled by Tyr-256.

Belongs to the glycosyl hydrolase 4 family. Requires NAD(+) as cofactor. It depends on a divalent metal cation as a cofactor.

It carries out the reaction 6-phospho-beta-D-glucosyl-(1-&gt;4)-D-glucose + H2O = D-glucose 6-phosphate + D-glucose. Functionally, hydrolyzes phospho-beta-glucosides. The chain is Probable 6-phospho-beta-glucosidase (licH) from Bacillus subtilis (strain 168).